Here is a 560-residue protein sequence, read N- to C-terminus: Membrane protein insertase YidC (560 aa).

The next 6 helical transmembrane spans lie at 7–27, 334–354, 357–377, 431–451, 476–496, and 522–542; these read NLIA…YFVV, AIDF…MNFF, YVGN…LLMF, LPIL…YVTI, LFGF…WPIL, and FMPL…LIYW.

It belongs to the OXA1/ALB3/YidC family. Type 1 subfamily. Interacts with the Sec translocase complex via SecD. Specifically interacts with transmembrane segments of nascent integral membrane proteins during membrane integration.

It localises to the cell inner membrane. Its function is as follows. Required for the insertion and/or proper folding and/or complex formation of integral membrane proteins into the membrane. Involved in integration of membrane proteins that insert both dependently and independently of the Sec translocase complex, as well as at least some lipoproteins. Aids folding of multispanning membrane proteins. The protein is Membrane protein insertase YidC of Rickettsia canadensis (strain McKiel).